A 257-amino-acid chain; its full sequence is Zinc transporter ZupT (257 aa).

Transmembrane regions (helical) follow at residues Leu5–Gly25, Leu33–Leu53, Gly61–Leu81, Ala109–Val129, Leu137–Ala157, Ile171–Ile191, Leu195–Leu215, and Gly236–Ile256. Asn120 and Glu123 together coordinate Fe(2+). Glu123 and His148 together coordinate Zn(2+). Fe(2+) contacts are provided by Asn149, Glu152, and Glu181. Glu152 contacts Zn(2+).

This sequence belongs to the ZIP transporter (TC 2.A.5) family. ZupT subfamily.

Its subcellular location is the cell inner membrane. It carries out the reaction Zn(2+)(in) = Zn(2+)(out). Its function is as follows. Mediates zinc uptake. May also transport other divalent cations. This chain is Zinc transporter ZupT, found in Salmonella paratyphi A (strain ATCC 9150 / SARB42).